A 284-amino-acid chain; its full sequence is Succinate dehydrogenase [ubiquinone] iron-sulfur subunit, mitochondrial (284 aa).

A mitochondrion-targeting transit peptide spans 1–26; that stretch reads MAAVVFSLRRSGPVFRLPGVLQVCRG. The region spanning 44–137 is the 2Fe-2S ferredoxin-type domain; the sequence is KKFAIYRWDP…VSKIYPLPHM (94 aa). The [2Fe-2S] cluster site is built by C97, C102, C105, and C117. A 4Fe-4S ferredoxin-type domain is found at 180–210; sequence DRDKLDGLYECILCACCSTSCPSYWWNADKY. Residues C190, C193, and C196 each contribute to the [4Fe-4S] cluster site. C200 lines the [3Fe-4S] cluster pocket. W205 provides a ligand contact to a ubiquinone. Residues C247 and C253 each contribute to the [3Fe-4S] cluster site. C257 is a [4Fe-4S] cluster binding site.

It belongs to the succinate dehydrogenase/fumarate reductase iron-sulfur protein family. In terms of assembly, component of complex II composed of four subunits: the flavoprotein (FP) sdha, iron-sulfur protein (IP) sdhb, and a cytochrome b composed of sdhc and sdhd. It depends on [2Fe-2S] cluster as a cofactor. Requires [3Fe-4S] cluster as cofactor. [4Fe-4S] cluster is required as a cofactor.

Its subcellular location is the mitochondrion inner membrane. The catalysed reaction is a quinone + succinate = fumarate + a quinol. It carries out the reaction (R)-malate + a quinone = enol-oxaloacetate + a quinol. The enzyme catalyses (S)-malate + a quinone = enol-oxaloacetate + a quinol. The protein operates within carbohydrate metabolism; tricarboxylic acid cycle; fumarate from succinate (eukaryal route): step 1/1. Enol-oxaloacetate inhibits the succinate dehydrogenase activity. In terms of biological role, iron-sulfur protein (IP) subunit of the succinate dehydrogenase complex (mitochondrial respiratory chain complex II), responsible for transferring electrons from succinate to ubiquinone (coenzyme Q). SDH also oxidizes malate to the non-canonical enol form of oxaloacetate, enol-oxaloacetate. Enol-oxaloacetate, which is a potent inhibitor of the succinate dehydrogenase activity, is further isomerized into keto-oxaloacetate. The sequence is that of Succinate dehydrogenase [ubiquinone] iron-sulfur subunit, mitochondrial (sdhb) from Xenopus tropicalis (Western clawed frog).